The following is a 127-amino-acid chain: MAIVGLGTDIVEIERITAHVARSGDKLAKRVLTEAEFDIYQQHSQPSRYLAKRFAAKEAAAKALGTGIGRGVSFQHIHIGNTPDGAPTIDFTQGAQQRLALLNGVVGHISIADEKSYAIATVILESR.

Asp-9 and Glu-58 together coordinate Mg(2+).

The protein belongs to the P-Pant transferase superfamily. AcpS family. Mg(2+) serves as cofactor.

It localises to the cytoplasm. The catalysed reaction is apo-[ACP] + CoA = holo-[ACP] + adenosine 3',5'-bisphosphate + H(+). Its function is as follows. Transfers the 4'-phosphopantetheine moiety from coenzyme A to a Ser of acyl-carrier-protein. The sequence is that of Holo-[acyl-carrier-protein] synthase from Shewanella sp. (strain MR-4).